The primary structure comprises 667 residues: Transketolase (667 aa).

Position 27 (His-27) interacts with substrate. Residues His-67 and 115–117 (GPL) each bind thiamine diphosphate. Asp-156 lines the Mg(2+) pocket. Thiamine diphosphate-binding residues include Gly-157 and Asn-186. The Mg(2+) site is built by Asn-186 and Ile-188. 3 residues coordinate substrate: His-262, Arg-357, and Ser-384. A thiamine diphosphate-binding site is contributed by His-262. Residue Glu-411 is the Proton donor of the active site. Phe-437 is a binding site for thiamine diphosphate. Positions 461, 469, and 520 each coordinate substrate.

Belongs to the transketolase family. In terms of assembly, homodimer. It depends on Mg(2+) as a cofactor. Requires Ca(2+) as cofactor. The cofactor is Mn(2+). Co(2+) is required as a cofactor. Thiamine diphosphate serves as cofactor.

It carries out the reaction D-sedoheptulose 7-phosphate + D-glyceraldehyde 3-phosphate = aldehydo-D-ribose 5-phosphate + D-xylulose 5-phosphate. Its function is as follows. Catalyzes the transfer of a two-carbon ketol group from a ketose donor to an aldose acceptor, via a covalent intermediate with the cofactor thiamine pyrophosphate. This is Transketolase (tkt) from Bacillus subtilis (strain 168).